Reading from the N-terminus, the 542-residue chain is MATNYIFVTGGVVSSLGKGIAAASLAAILEARGLNVTMMKLDPYINVDPGTMSPTQHGEVFVTQDGAETDLDLGHYERFIRTKMTKRNNFTTGKIYSEVLRKERRGDYLGATVQVIPHITNEIKARVIEGAAGHDVAIVEVGGTVGDIESLPFLEALRQLAVQVGREKTIFMHLTLVPYIPTAGEVKTKPTQHSVKELLSIGIQPDVLICRSDRMVPPNERAKIALFCNVPEKAVISLKDVDSIYRIPALLQSQGLDDLICQRFRLACKEADLSEWEQVLYRQANPTGDVTIGMVGKYVELPDAYKSVNEALKHAGLTNRLNVHIKYIDSQDVETKGIDVLKGVDGILVPGGFGYRGVEGKILTAQYARENNIPYLGICLGMQVAFIEYARHVAGLTQANSSEFDKNCPQPVVGLITEWQDADGSVEQRSENSDLGGTMRLGAQQCHLIEGSKARELYGKETIEERHRHRYEVNNTLLPQIEAAGLKVTGLSADKKLVEIIEVPNHPWFVACQFHPEFTSTPRDGHPLFAGFVKAAKENQKK.

The segment at 1-266 is amidoligase domain; sequence MATNYIFVTG…DDLICQRFRL (266 aa). Ser14 is a CTP binding site. Residue Ser14 participates in UTP binding. Residues 15 to 20 and Asp72 each bind ATP; that span reads SLGKGI. 2 residues coordinate Mg(2+): Asp72 and Glu140. CTP is bound by residues 147-149, 187-192, and Lys223; these read DIE and KTKPTQ. Residues 187–192 and Lys223 contribute to the UTP site; that span reads KTKPTQ. 239–241 contacts ATP; it reads KDV. One can recognise a Glutamine amidotransferase type-1 domain in the interval 291–542; that stretch reads TIGMVGKYVE…VKAAKENQKK (252 aa). An L-glutamine-binding site is contributed by Gly352. The active-site Nucleophile; for glutamine hydrolysis is Cys379. L-glutamine contacts are provided by residues 380-383, Glu403, and Arg470; that span reads LGMQ. Catalysis depends on residues His515 and Glu517.

The protein belongs to the CTP synthase family. In terms of assembly, homotetramer.

It carries out the reaction UTP + L-glutamine + ATP + H2O = CTP + L-glutamate + ADP + phosphate + 2 H(+). The catalysed reaction is L-glutamine + H2O = L-glutamate + NH4(+). It catalyses the reaction UTP + NH4(+) + ATP = CTP + ADP + phosphate + 2 H(+). The protein operates within pyrimidine metabolism; CTP biosynthesis via de novo pathway; CTP from UDP: step 2/2. Its activity is regulated as follows. Allosterically activated by GTP, when glutamine is the substrate; GTP has no effect on the reaction when ammonia is the substrate. The allosteric effector GTP functions by stabilizing the protein conformation that binds the tetrahedral intermediate(s) formed during glutamine hydrolysis. Inhibited by the product CTP, via allosteric rather than competitive inhibition. Its function is as follows. Catalyzes the ATP-dependent amination of UTP to CTP with either L-glutamine or ammonia as the source of nitrogen. Regulates intracellular CTP levels through interactions with the four ribonucleotide triphosphates. This chain is CTP synthase, found in Mannheimia succiniciproducens (strain KCTC 0769BP / MBEL55E).